Here is a 580-residue protein sequence, read N- to C-terminus: Alpha-glucosidase (580 aa).

A signal peptide spans 1–19 (MRPLGALSLFALLATTVSG). Asparagine 102 and asparagine 127 each carry an N-linked (GlcNAc...) asparagine glycan. Aspartate 224 serves as the catalytic Nucleophile. The Proton donor role is filled by glutamate 290. An N-linked (GlcNAc...) asparagine glycan is attached at asparagine 501. The chain crosses the membrane as a helical span at residues 560-580 (AAAINLSIGLLLAIMARYIFV).

It belongs to the glycosyl hydrolase 13 family. (Microbial infection) Binds to L.sphaericus BinB subunit of the binary toxin BinAB. In 4th-instar larvae produced in the brush border membranes of the gastric caeca and the posterior stomach cells (at protein level).

It localises to the membrane. It catalyses the reaction Hydrolysis of terminal, non-reducing (1-&gt;4)-linked alpha-D-glucose residues with release of alpha-D-glucose.. In terms of biological role, probably an alpha-glucosidase, it has no alpha-amylase function. Functionally, (Microbial infection) Serves as the larval receptor for Lysinibacillus sphaericus BinB toxin. This Culex pipiens (House mosquito) protein is Alpha-glucosidase.